Here is a 91-residue protein sequence, read N- to C-terminus: RNA-binding protein Hfq (91 aa).

The Sm domain maps to 9-68 (DPFLNALRRERVPVSIYLVNGIKLQGQVESFDQFVILLKNTVSQMVYKHAISTVVPSRPF). Residues 66-91 (RPFNVGSHQGGSSNYNAQQDDSAGEQ) form a disordered region. Residues 71–91 (GSHQGGSSNYNAQQDDSAGEQ) are compositionally biased toward polar residues.

It belongs to the Hfq family. In terms of assembly, homohexamer.

RNA chaperone that binds small regulatory RNA (sRNAs) and mRNAs to facilitate mRNA translational regulation in response to envelope stress, environmental stress and changes in metabolite concentrations. Also binds with high specificity to tRNAs. The protein is RNA-binding protein Hfq of Shewanella amazonensis (strain ATCC BAA-1098 / SB2B).